The following is a 379-amino-acid chain: uncharacterized protein (379 aa).

3 disordered regions span residues 1 to 37, 130 to 150, and 332 to 379; these read MSSIQGKGTAGPSPEGIPNSREDGEMNPEGVTISGQT, VRYSSGRHGMDRNKSSSLSPE, and NPPI…RGSR.

It belongs to the chlamydial CPn_0499/CT_392/TC_0671 family.

This is an uncharacterized protein from Chlamydia muridarum (strain MoPn / Nigg).